A 399-amino-acid chain; its full sequence is MTAAAPSKPLPRTPRVRQAYPLDYPLLLCALGLLAFGWVMVTSASMSIAEACCQNPFHYSIRHAIALGLALMLGLMAYSVPSHWWERHGVWLFLASALVLILVLIPGIGRTVNGATRWIPLGPLNVQPSEFVKLFAILYVAGYLVRHADKVVNQLSGFIRPLILIGAAALLILMQPDFGTTAVMLATVMGMLFLGGASLLPFIVLLAIVGAGLVTLVIFSPYRLERVVSFLNPWEDPFNSGYQLSQALIAFGRGEWFGVGLGNGIQKQYFLPEAHTDFLPSVIGEELGLAGMLVLIAAFVFLSWRAMSIGVRAEALKRPFESYVAQGIGLWIGLQSFVNLGVNVGILPTKGLTLPFMSYGSNSLMVGCMAVAILLRIDVMLRRVESEAKFKRGTPWSRA.

The Cytoplasmic segment spans residues 1-25 (MTAAAPSKPLPRTPRVRQAYPLDYP). The chain crosses the membrane as a helical span at residues 26–46 (LLLCALGLLAFGWVMVTSASM). Residues 47-64 (SIAEACCQNPFHYSIRHA) are Periplasmic-facing. The chain crosses the membrane as a helical span at residues 65–85 (IALGLALMLGLMAYSVPSHWW). Residues 86-88 (ERH) lie on the Cytoplasmic side of the membrane. The helical transmembrane segment at 89–109 (GVWLFLASALVLILVLIPGIG) threads the bilayer. Residues 110–117 (RTVNGATR) lie on the Periplasmic side of the membrane. Residues 118 to 138 (WIPLGPLNVQPSEFVKLFAIL) form a helical membrane-spanning segment. Over 139–153 (YVAGYLVRHADKVVN) the chain is Cytoplasmic. A helical membrane pass occupies residues 154–174 (QLSGFIRPLILIGAAALLILM). Residues 175–177 (QPD) lie on the Periplasmic side of the membrane. 2 helical membrane passes run 178–198 (FGTT…GGAS) and 199–219 (LLPF…LVIF). Over 220–281 (SPYRLERVVS…PEAHTDFLPS (62 aa)) the chain is Periplasmic. A helical transmembrane segment spans residues 282-302 (VIGEELGLAGMLVLIAAFVFL). The Cytoplasmic portion of the chain corresponds to 303–326 (SWRAMSIGVRAEALKRPFESYVAQ). A helical membrane pass occupies residues 327–347 (GIGLWIGLQSFVNLGVNVGIL). The Periplasmic portion of the chain corresponds to 348-353 (PTKGLT). Residues 354–374 (LPFMSYGSNSLMVGCMAVAIL) form a helical membrane-spanning segment. Topologically, residues 375–399 (LRIDVMLRRVESEAKFKRGTPWSRA) are cytoplasmic.

This sequence belongs to the SEDS family. FtsW subfamily.

Its subcellular location is the cell inner membrane. It catalyses the reaction [GlcNAc-(1-&gt;4)-Mur2Ac(oyl-L-Ala-gamma-D-Glu-L-Lys-D-Ala-D-Ala)](n)-di-trans,octa-cis-undecaprenyl diphosphate + beta-D-GlcNAc-(1-&gt;4)-Mur2Ac(oyl-L-Ala-gamma-D-Glu-L-Lys-D-Ala-D-Ala)-di-trans,octa-cis-undecaprenyl diphosphate = [GlcNAc-(1-&gt;4)-Mur2Ac(oyl-L-Ala-gamma-D-Glu-L-Lys-D-Ala-D-Ala)](n+1)-di-trans,octa-cis-undecaprenyl diphosphate + di-trans,octa-cis-undecaprenyl diphosphate + H(+). It participates in cell wall biogenesis; peptidoglycan biosynthesis. Peptidoglycan polymerase that is essential for cell division. The sequence is that of Probable peptidoglycan glycosyltransferase FtsW from Allochromatium vinosum (strain ATCC 17899 / DSM 180 / NBRC 103801 / NCIMB 10441 / D) (Chromatium vinosum).